The primary structure comprises 426 residues: Histidine--tRNA ligase (426 aa).

It belongs to the class-II aminoacyl-tRNA synthetase family. As to quaternary structure, homodimer.

It localises to the cytoplasm. The catalysed reaction is tRNA(His) + L-histidine + ATP = L-histidyl-tRNA(His) + AMP + diphosphate + H(+). The polypeptide is Histidine--tRNA ligase (Pseudoalteromonas atlantica (strain T6c / ATCC BAA-1087)).